The following is an 859-amino-acid chain: MMSTKAFTLVPAIEREQLLSDRDRGLLECVECCGRNLYVGTSDCFVYHFLLEEKTLPGGSATFTATRQLHRHLGFKKAVSELRAASALSRLLVLCDGCISLVHMLSLEPVPSGARIKGATAFALNENPVSGDPFCVEVCIISVKRRTIQVFLVYEDRVQIVREVSTPEQPLAVAVDGHFLCLALTTQYIILNYSTGAAQDLFPFCSEERRPIVKRIGRQEFLLAGPGGLGMFATVAGISQRAPVRWSENVIGAAVCFPYVVALDDEFITVHSMLDQQQKQTLPFKEGHILQDFEGRVIVATSKGVYILVPLPLEKRIQDLLASHRVEEALVLAKGARRNIPKEKFQVMYRRILLQAGFIQFAQLQFLKAKELFRSGQLDVRELISLYPLLLPTSSSFTRSHPPLHEFADLNQLTQGDQDKVAKCKRFLMSYLNEVRSTEVANGYKEDIDTALLKLYAEADHDSLLDLLVTENFCLLPDSAAWLEKHKKYFALGLLYHYNHQDAAAVQLWVSIVNGDIQDSTRSDLYEYIVDFLTYSTDPDLVWRHADWVLQRSQEVGVQVFTKRPLDEQQSGFNPDDIISCLKKYPQALVKYLEHLVTERRLQKEEYHTHLAVLYLDEVLQQRPCTPDKDAEVTETQAKLRRLLQESDLYRVHFLMDRTRGAGLPLESAILHGKLEQHEEALHILVHELADFPAAEDYCLWRSEGRDPPYRQRLFHLLLAVYLGPGPAAPARTVAAVDLLNRHAVEFDAAQVLQLLPGTWSVQLLRPFLMGAMRDSIHARRTTQVAVGLARSENLIYKYDKMKLKGSSVRLSDEKLCQMCQNPFLEPVFVRYPNGGLVHTHCAASRHTEPSSPSAGART.

Positions 24–297 (RGLLECVECC…HILQDFEGRV (274 aa)) constitute a CNH domain. Residues 563-727 (KRPLDEQQSG…LLAVYLGPGP (165 aa)) form a CHCR repeat.

Belongs to the TRAP1 family. In terms of assembly, interacts with TGFBR2 and ACVR2B; in the absence of ligand stimulation. Interacts with TGFBR1, ACVRL1, BMPR1A and ACVR1B; in the absence of ligand stimulation and to a less extent. Interacts with SMAD4; the interaction seems to be mutually exclusive with the interaction of SMAD4 and phosphorylated SMAD2. May interact with ALOX5. Interacts with RAB5C. Interacts with VPS8, VPS11 and VPS16. Component of the putative class C core vacuole/endosome tethering (CORVET) complex; the core of which composed of the class C Vps proteins VPS11, VPS16, VPS18 and VPS33A, is associated with VPS8 and TGFBRAP1.

It localises to the cytoplasm. The protein localises to the early endosome. Plays a role in the TGF-beta/activin signaling pathway. It associates with inactive heteromeric TGF-beta and activin receptor complexes, mainly through the type II receptor, and is released upon activation of signaling. May recruit SMAD4 to the vicinity of the receptor complex and facilitate its interaction with receptor-regulated Smads, such as SMAD2. Functionally, plays a role in vesicle-mediated protein trafficking of the endocytic membrane transport pathway. Believed to act as a component of the putative CORVET endosomal tethering complexes which is proposed to be involved in the Rab5-to-Rab7 endosome conversion probably implicating MON1A/B, and via binding SNAREs and SNARE complexes to mediate tethering and docking events during SNARE-mediated membrane fusion. The CORVET complex is proposed to function as a Rab5 effector to mediate early endosome fusion probably in specific endosome subpopulations. Functions predominantly in APPL1-containing endosomes and in degradative but not recycling trafficking of endocytosed cargo. In Bos taurus (Bovine), this protein is Transforming growth factor-beta receptor-associated protein 1 (TGFBRAP1).